The following is a 344-amino-acid chain: tRNA N6-adenosine threonylcarbamoyltransferase (344 aa).

Fe cation-binding residues include histidine 113 and histidine 117. Residues 135–139 (LVSGG), aspartate 169, glycine 182, aspartate 186, and asparagine 278 each bind substrate. Aspartate 306 lines the Fe cation pocket. A disordered region spans residues 325 to 344 (ESPISVGTDPSLSVETPQVF). The segment covering 326–344 (SPISVGTDPSLSVETPQVF) has biased composition (polar residues).

Belongs to the KAE1 / TsaD family. It depends on Fe(2+) as a cofactor.

It localises to the cytoplasm. It carries out the reaction L-threonylcarbamoyladenylate + adenosine(37) in tRNA = N(6)-L-threonylcarbamoyladenosine(37) in tRNA + AMP + H(+). In terms of biological role, required for the formation of a threonylcarbamoyl group on adenosine at position 37 (t(6)A37) in tRNAs that read codons beginning with adenine. Is involved in the transfer of the threonylcarbamoyl moiety of threonylcarbamoyl-AMP (TC-AMP) to the N6 group of A37, together with TsaE and TsaB. TsaD likely plays a direct catalytic role in this reaction. The protein is tRNA N6-adenosine threonylcarbamoyltransferase of Corynebacterium glutamicum (strain ATCC 13032 / DSM 20300 / JCM 1318 / BCRC 11384 / CCUG 27702 / LMG 3730 / NBRC 12168 / NCIMB 10025 / NRRL B-2784 / 534).